We begin with the raw amino-acid sequence, 158 residues long: Cyclic pyranopterin monophosphate synthase (158 aa).

Substrate contacts are provided by residues 75–77 (LCH) and 113–114 (ME). Asp128 is a catalytic residue.

Belongs to the MoaC family. Homohexamer; trimer of dimers.

It catalyses the reaction (8S)-3',8-cyclo-7,8-dihydroguanosine 5'-triphosphate = cyclic pyranopterin phosphate + diphosphate. It functions in the pathway cofactor biosynthesis; molybdopterin biosynthesis. Catalyzes the conversion of (8S)-3',8-cyclo-7,8-dihydroguanosine 5'-triphosphate to cyclic pyranopterin monophosphate (cPMP). This chain is Cyclic pyranopterin monophosphate synthase, found in Mannheimia succiniciproducens (strain KCTC 0769BP / MBEL55E).